We begin with the raw amino-acid sequence, 124 residues long: Small ribosomal subunit protein uS13 (124 aa).

A disordered region spans residues 94-124 (GLPLRGQRTKNNSRTRKGKRKTVANKKKATK). Positions 100–124 (QRTKNNSRTRKGKRKTVANKKKATK) are enriched in basic residues.

The protein belongs to the universal ribosomal protein uS13 family. In terms of assembly, part of the 30S ribosomal subunit. Forms a loose heterodimer with protein S19. Forms two bridges to the 50S subunit in the 70S ribosome.

Its function is as follows. Located at the top of the head of the 30S subunit, it contacts several helices of the 16S rRNA. In the 70S ribosome it contacts the 23S rRNA (bridge B1a) and protein L5 of the 50S subunit (bridge B1b), connecting the 2 subunits; these bridges are implicated in subunit movement. Contacts the tRNAs in the A and P-sites. The protein is Small ribosomal subunit protein uS13 of Flavobacterium johnsoniae (strain ATCC 17061 / DSM 2064 / JCM 8514 / BCRC 14874 / CCUG 350202 / NBRC 14942 / NCIMB 11054 / UW101) (Cytophaga johnsonae).